The chain runs to 713 residues: Mitochondrial intermediate peptidase (713 aa).

The N-terminal 35 residues, 1–35 (MLCVGRLGGLGARAAALPPRRAGRGILEAGIRARR), are a transit peptide targeting the mitochondrion. K126 bears the N6-acetyllysine mark. Residue H495 participates in Zn(2+) binding. The active site involves E496. Residues H499 and H502 each coordinate Zn(2+).

This sequence belongs to the peptidase M3 family. Monomer. Zn(2+) is required as a cofactor.

Its subcellular location is the mitochondrion matrix. The catalysed reaction is Release of an N-terminal octapeptide as second stage of processing of some proteins imported into the mitochondrion.. Activity is divalent cation-dependent. It is stimulated by manganese, magnesium or calcium ions and reversibly inhibited by zinc, cobalt and iron. Its function is as follows. Cleaves proteins, imported into the mitochondrion, to their mature size. In Pongo abelii (Sumatran orangutan), this protein is Mitochondrial intermediate peptidase (MIPEP).